The following is a 385-amino-acid chain: Acetate kinase (385 aa).

Asparagine 9 provides a ligand contact to Mg(2+). Residue lysine 16 coordinates ATP. Residue arginine 75 participates in substrate binding. Catalysis depends on aspartate 132, which acts as the Proton donor/acceptor. Residues 192–196 (HLGNG), 266–268 (DFR), and 314–318 (GIGEN) each bind ATP. Mg(2+) is bound at residue glutamate 368.

It belongs to the acetokinase family. Homodimer. Mg(2+) serves as cofactor. Requires Mn(2+) as cofactor.

It localises to the cytoplasm. It carries out the reaction acetate + ATP = acetyl phosphate + ADP. The protein operates within metabolic intermediate biosynthesis; acetyl-CoA biosynthesis; acetyl-CoA from acetate: step 1/2. Its function is as follows. Catalyzes the formation of acetyl phosphate from acetate and ATP. Can also catalyze the reverse reaction. In Mycobacterium bovis (strain ATCC BAA-935 / AF2122/97), this protein is Acetate kinase.